The following is a 539-amino-acid chain: Netrin-G1 (539 aa).

The signal sequence occupies residues 1 to 28; it reads MYLSRFLSIHALWVTVSSVMQPYPLVWG. Intrachain disulfides connect Cys-33–Cys-50, Cys-72–Cys-92, and Cys-80–Cys-88. The region spanning 46–296 is the Laminin N-terminal domain; sequence DYMACQPEST…AISDIKVRGR (251 aa). Residues 80–91 form an NGL discriminant loop I region; it reads CAMGNPYMCNNE. A glycan (N-linked (GlcNAc...) asparagine) is linked at Asn-133. A disulfide bond links Cys-182 and Cys-206. The interval 208–214 is NGL discriminant loop II; that stretch reads EEYSTGY. Positions 273-275 are NGL discriminant loop III; that stretch reads EIF. Cystine bridges form between Cys-297–Cys-306, Cys-299–Cys-315, Cys-317–Cys-326, Cys-329–Cys-354, Cys-364–Cys-373, Cys-366–Cys-384, Cys-387–Cys-396, Cys-399–Cys-417, Cys-420–Cys-432, Cys-422–Cys-438, Cys-440–Cys-449, Cys-452–Cys-462, Cys-467–Cys-480, Cys-474–Cys-486, and Cys-488–Cys-497. 3 Laminin EGF-like domains span residues 297–356, 364–419, and 420–469; these read CKCN…TCIP, CECF…VCIE, and CYCN…VCDN. An N-linked (GlcNAc...) asparagine glycan is attached at Asn-320. N-linked (GlcNAc...) asparagine glycosylation occurs at Asn-406. A glycan (N-linked (GlcNAc...) asparagine) is linked at Asn-433. Ser-510 is lipidated: GPI-anchor amidated serine. Positions 511 to 539 are cleaved as a propeptide — removed in mature form; it reads DSGQGAPPHGSPALLLLTTLLGTASPLVF.

Interacts with NGL1. Post-translationally, N-glycosylated. In terms of tissue distribution, highly expressed in the thalamus, with very low expression, if any, in other tissues.

The protein resides in the cell membrane. In terms of biological role, involved in controlling patterning and neuronal circuit formation at the laminar, cellular, subcellular and synaptic levels. Promotes neurite outgrowth of both axons and dendrites. The chain is Netrin-G1 (NTNG1) from Homo sapiens (Human).